A 681-amino-acid chain; its full sequence is Methionine--tRNA ligase (681 aa).

A 'HIGH' region motif is present at residues 27–37 (DYANGTPHIGH). A 'KMSKS' region motif is present at residues 316 to 320 (KMGKS). Residue Lys319 coordinates ATP. Residues 522 to 571 (FPKPEPKADETKNAEAKPPKPQAKKEKKTVTDTAPAKTTEQKPEAAAPAQ) form a disordered region. A compositionally biased stretch (basic and acidic residues) spans 525-539 (PEPKADETKNAEAKP). Residues 580–681 (DFAKIDLRIA…LDLPSGTKVR (102 aa)) form the tRNA-binding domain.

The protein belongs to the class-I aminoacyl-tRNA synthetase family. MetG type 2B subfamily. Homodimer.

It is found in the cytoplasm. The enzyme catalyses tRNA(Met) + L-methionine + ATP = L-methionyl-tRNA(Met) + AMP + diphosphate. Functionally, is required not only for elongation of protein synthesis but also for the initiation of all mRNA translation through initiator tRNA(fMet) aminoacylation. The sequence is that of Methionine--tRNA ligase (metG) from Deinococcus radiodurans (strain ATCC 13939 / DSM 20539 / JCM 16871 / CCUG 27074 / LMG 4051 / NBRC 15346 / NCIMB 9279 / VKM B-1422 / R1).